The following is a 382-amino-acid chain: Guanine nucleotide exchange factor for Rab-3A (382 aa).

Residues 1–17 (MWSGPPQPDQGLPPPLA) are compositionally biased toward pro residues. Positions 1 to 60 (MWSGPPQPDQGLPPPLAAVPVPWKSTDPCQGHRESPGALVETSAGEEAQGQEGPAAAQLD) are disordered. Residues 45 to 58 (GEEAQGQEGPAAAQ) are compositionally biased toward low complexity. The stretch at 73 to 161 (EKGSEFLKEE…AEVTALKTLV (89 aa)) forms a coiled coil. Residues 166–198 (PASPNRELHPQLLSPTKAGPRKGHSRHKSTSST) form a disordered region. A phosphoserine mark is found at serine 168 and serine 179. The span at 184–194 (GPRKGHSRHKS) shows a compositional bias: basic residues.

This sequence belongs to the SEC2 family. In terms of assembly, interacts with RAB3A and IHPK1 through the coiled-coil domain. This interaction is competitive. IHPK1 kinase activity is not required for this interaction.

In terms of biological role, guanine nucleotide exchange factor (GEF) which may activate RAB3A, a GTPase that regulates synaptic vesicle exocytosis. Promotes the exchange of GDP to GTP, converting inactive GDP-bound Rab proteins into their active GTP-bound form. May also activate RAB8A and RAB8B. This Homo sapiens (Human) protein is Guanine nucleotide exchange factor for Rab-3A (RAB3IL1).